A 197-amino-acid polypeptide reads, in one-letter code: MADQRQRSLSTSGESLYHVLGLDKNATTDDIKKCYRKLALKYHPDKNPDNPEASEKFKEINNAHGILADSTKRNIYDKYGSLGLYVAEQFGEENVNTYFVLSSWWAKALFMFCGLITGCYCCCCLCCCCNCCCGKCKPRPPEGEDQDIYVSPEDLEAQMQSDERDTEGPVLVQPASATETTQLTSDSHASYHTDGFN.

In terms of domain architecture, J spans glycine 13–leucine 82. The segment at glutamate 153–asparagine 197 is disordered. Over residues alanine 175–asparagine 197 the composition is skewed to polar residues.

Palmitoylated. Palmitoylation occurs probably in the cysteine-rich domain and regulates DNAJC5 stable membrane attachment.

It is found in the cytoplasm. Its subcellular location is the cytosol. The protein localises to the membrane. It localises to the cytoplasmic vesicle. The protein resides in the secretory vesicle. It is found in the chromaffin granule membrane. Its subcellular location is the melanosome. The protein localises to the cell membrane. May have an important role in presynaptic function. May be involved in calcium-dependent neurotransmitter release at nerve endings. The polypeptide is DnaJ homolog subfamily C member 5 (Xenopus laevis (African clawed frog)).